We begin with the raw amino-acid sequence, 549 residues long: NADH-quinone oxidoreductase subunit N (549 aa).

Helical transmembrane passes span 26–46, 57–77, 96–116, 148–168, 171–191, 206–226, 253–273, 297–317, 321–341, 347–367, 375–395, 421–441, 466–486, and 496–516; these read LSPLLVVFAAGVIGVIVEAFV, ALAMVAVGVAFVLTLVQVGAL, PSLFFQGVILALALASLLLIA, HTEVYPLVMFAVLGMQLFTAA, FLTMFIALEVMSLPLYLLCGL, YFLLGAFSSAFFLFGIAMVYG, LLIGIAMIGVGMLFKVGTVPF, LVAAFGAMLRVFYVAFGTTVA, PMLWVVAILTMVVAAVIAVTQ, LLAYSSVVHAGFILTAVVAAN, MFYLAAYGFTTVGAFAIVTLV, AASLGLFLLAFAGIPLTSGFI, SAVTAFFYVRIIVLMFFAEPA, and GILTGTTVGLGVAATLLLGIL.

Belongs to the complex I subunit 2 family. NDH-1 is composed of 14 different subunits. Subunits NuoA, H, J, K, L, M, N constitute the membrane sector of the complex.

The protein resides in the cell membrane. It carries out the reaction a quinone + NADH + 5 H(+)(in) = a quinol + NAD(+) + 4 H(+)(out). In terms of biological role, NDH-1 shuttles electrons from NADH, via FMN and iron-sulfur (Fe-S) centers, to quinones in the respiratory chain. The immediate electron acceptor for the enzyme in this species is believed to be a menaquinone. Couples the redox reaction to proton translocation (for every two electrons transferred, four hydrogen ions are translocated across the cytoplasmic membrane), and thus conserves the redox energy in a proton gradient. The polypeptide is NADH-quinone oxidoreductase subunit N (Thermobifida fusca (strain YX)).